Consider the following 354-residue polypeptide: Malate dehydrogenase 1, peroxisomal (354 aa).

Residues 6 to 14 form a peroxisomal targeting signal PTS2 region; it reads RIARISAHL. Residues 49–55 and D75 each bind NAD(+); that span reads GAAGGIG. 2 residues coordinate substrate: R122 and R128. Residues N135 and 158 to 160 contribute to the NAD(+) site; that span reads ISN. Residues N160 and R194 each coordinate substrate. H218 (proton acceptor) is an active-site residue. Residue M269 participates in NAD(+) binding.

The protein belongs to the LDH/MDH superfamily. MDH type 1 family. Homodimer. In terms of tissue distribution, expressed in rosette leaves at low levels.

It localises to the peroxisome. The enzyme catalyses (S)-malate + NAD(+) = oxaloacetate + NADH + H(+). In terms of biological role, catalyzes a reversible NAD-dependent dehydrogenase reaction involved in central metabolism and redox homeostasis between organelle compartments. Peroxisomal NAD-dependent malate dehydrogenase involved in fatty acid beta-oxidation. Reoxidizes NADH from the beta-oxidation and provides NAD for the conversion of fatty acyl-CoA to acetyl-CoA. Does not participate directly in the glyoxylate cycle. Required for maintenance of photosynthetic rates under photorespiratory conditions, and carbon flow during photorespiration. Supplies NADH reductant to the peroxisomal hydroxypyruvate reductase (HPR), which reduces hydroxypyruvate into glycerate in the photorespiratory cycle. This Arabidopsis thaliana (Mouse-ear cress) protein is Malate dehydrogenase 1, peroxisomal.